The primary structure comprises 690 residues: Ras guanyl-releasing protein 3 (690 aa).

The N-terminal Ras-GEF domain maps to 3–125 (SSGLGKAATL…SLIDISSIPS (123 aa)). Positions 152 to 383 (EPIELAEHLT…YKLSLVLEPR (232 aa)) constitute a Ras-GEF domain. EF-hand domains follow at residues 420–455 (HIRK…FPFL) and 458–484 (FCVL…AKSQ). Residues D433, D435, D437, Y439, D444, D462, D464, D466, and E473 each contribute to the Ca(2+) site. Residues 494 to 544 (IHNFQEMTYLKPTFCEHCAGFLWGIIKQGYKCKDCGANCHKQCKDLLVLAC) form a Phorbol-ester/DAG-type zinc finger. Positions 667–690 (VDRGTEFELDQDEGEETRQDGEDG) are disordered.

This sequence belongs to the RASGRP family.

Guanine nucleotide exchange factor (GEF) for Ras and Rap1. This Homo sapiens (Human) protein is Ras guanyl-releasing protein 3 (RASGRP3).